The primary structure comprises 231 residues: MPKHGKKYVEAAKQVDSEKQYEVREALELVRKLAPAKFDETVEAAVKLGVDPRHADQQVRGAVVLPHGTGKTRTVLVFAKGEKVTEAEKAGADYVGGEEMVAKIQGGWMEFDVAIATPDMMSAVGKIGRILGPRGLMPNPKTGTVTFDIARAVAEVKAGKIQYRVDKAGNIHAPIGKVSFEVEKLEENLKTLIDALIRAKPAAAKGQYLRGIVVTSTMGPGVRVNTRKFIG.

The protein belongs to the universal ribosomal protein uL1 family. In terms of assembly, part of the 50S ribosomal subunit.

Functionally, binds directly to 23S rRNA. The L1 stalk is quite mobile in the ribosome, and is involved in E site tRNA release. In terms of biological role, protein L1 is also a translational repressor protein, it controls the translation of the L11 operon by binding to its mRNA. The chain is Large ribosomal subunit protein uL1 from Desulforudis audaxviator (strain MP104C).